We begin with the raw amino-acid sequence, 1506 residues long: MESLDRRRTGSEQEEGFGVQSRRATDLGMVPNLRRSNSSLCKSRRFLCSFSSEKQENLSSWIPENIKKKECVYFVESSKLSDAGKVVCACGYTHEQHLEVAIKPHTFQGKEWDPKKHVQEMPTDAFGDIVFTDLSQKVGKYVRVSQDTPSSVIYQLMTQHWGLDVPNLLISVTGGAKNFNMKLRLKSIFRRGLVKVAQTTGAWIITGGSHTGVMKQVGEAVRDFSLSSSCKEGEVITIGVATWGTIHNREGLIHPMGGFPAEYMLDEEGQGNLTCLDSNHSHFILVDDGTHGQYGVEIPLRTKLEKFISEQTKERGGVAIKIPIVCVVLEGGPGTLHTIYNAINNGTPCVIVEGSGRVADVIAQVATLPVSEITISLIQQKLSIFFQEMFETFTENQIVEWTKKIQDIVRRRQLLTIFREGKDGQQDVDVAILQALLKASRSQDHFGHENWDHQLKLAVAWNRVDIARSEIFTDEWQWKPADLHPMMTAALISNKPEFVRLFLENGVRLKEFVTWDTLLCLYENLEPSCLFHSKLQKVLAEEQRLAYASATPRLHMHHVAQVLRELLGDSTQLLYPRPRYTDRPRLSMTVPHIKLNVQGVSLRSLYKRSTGHVTFTIDPVRDLLIWAVIQNHRELAGIIWAQSQDCTAAALACSKILKELSKEEEDTDSSEEMLALADEFEHRAIGVFTECYRKDEERAQKLLVRVSEAWGKTTCLQLALEAKDMKFVSHGGIQAFLTKVWWGQLCVDNGLWRIILCMLAFPLLFTGFISFREKRLQALCRPARVRAFFNAPVVIFHMNILSYFAFLCLFAYVLMVDFQPSPSWCEYLIYLWLFSLVCEETRQLFYDPDGCGLMKMASLYFSDFWNKLDVGAILLFIVGLTCRLIPATLYPGRIILSLDFIMFCLRLMHIFTISKTLGPKIIIVKRMMKDVFFFLFLLAVWVVSFGVAKQAILIHNESRVDWIFRGVVYHSYLTIFGQIPTYIDGVNFSMDQCSPNGTDPYKPKCPESDWTGQAPAFPEWLTVTLLCLYLLFANILLLNLLIAMFNYTFQEVQEHTDQIWKFQRHDLIEEYHGRPPAPPPLILLSHLQLLIKRIVLKIPAKRHKQLKNKLEKNEETALLSWELYLKENYLQNQQYQQKQRPEQKIQDISEKVDTMVDLLDMDQVKRSGSTEQRLASLEEQVTQVTRALHWIVTTLKDSGFGSGAGALTLAPQRAFDEPDAELSIRRKVEEPGDGYHVSARHLLYPNARIMRFPVPNEKVPWAAEFLIYDPPFYTAEKDVALTDPVGDTAEPLSKISYNVVDGPTDRRSFHGVYVVEYGFPLNPMGRTGLRGRGSLSWFGPNHTLQPVVTRWKRNQGGAICRKSVRKMLEVLVMKLPRSEHWALPGGSREPGEMLPRKLKRVLRQEFWVAFETLLMQGTEVYKGYVDDPRNTDNAWIETVAVSIHFQDQNDMELKRLEENLHTHDPKELTRDLKLSTEWQVVDRRIPLYANHKTILQKVASLFGAHF.

A compositionally biased stretch (basic and acidic residues) spans 1–11 (MESLDRRRTGS). The interval 1–22 (MESLDRRRTGSEQEEGFGVQSR) is disordered. At 1 to 750 (MESLDRRRTG…WWGQLCVDNG (750 aa)) the chain is on the cytoplasmic side. ADP-D-ribose is bound by residues Thr173, Asn178, Arg301, Gly332, and Thr335. Position 738 is a phosphothreonine (Thr738). An intramembrane segment occupies 751 to 767 (LWRIILCMLAFPLLFTG). At 768-792 (FISFREKRLQALCRPARVRAFFNAP) the chain is on the cytoplasmic side. The chain crosses the membrane as a helical span at residues 793–813 (VVIFHMNILSYFAFLCLFAYV). The Extracellular segment spans residues 814 to 824 (LMVDFQPSPSW). Residues 825–845 (CEYLIYLWLFSLVCEETRQLF) traverse the membrane as a helical segment. Ca(2+) is bound by residues Glu840 and Gln843. At 846–864 (YDPDGCGLMKMASLYFSDF) the chain is on the cytoplasmic side. The helical transmembrane segment at 865-885 (WNKLDVGAILLFIVGLTCRLI) threads the bilayer. Residue Asn866 coordinates Ca(2+). Topologically, residues 886 to 893 (PATLYPGR) are extracellular. The helical transmembrane segment at 894–914 (IILSLDFIMFCLRLMHIFTIS) threads the bilayer. Residues 915 to 926 (KTLGPKIIIVKR) are Cytoplasmic-facing. Residues 927–947 (MMKDVFFFLFLLAVWVVSFGV) traverse the membrane as a helical segment. Residues 948–967 (AKQAILIHNESRVDWIFRGV) lie on the Extracellular side of the membrane. The segment at residues 968–982 (VYHSYLTIFGQIPTY) is an intramembrane region (pore-forming). Residues 976-979 (FGQI) carry the Selectivity filter motif. The Extracellular segment spans residues 983 to 1019 (IDGVNFSMDQCSPNGTDPYKPKCPESDWTGQAPAFPE). Cys993 and Cys1005 are joined by a disulfide. A helical transmembrane segment spans residues 1020-1041 (WLTVTLLCLYLLFANILLLNLL). The Cytoplasmic segment spans residues 1042-1076 (IAMFNYTFQEVQEHTDQIWKFQRHDLIEEYHGRPP). Residue Glu1070 coordinates Ca(2+). Residues 1077–1095 (APPPLILLSHLQLLIKRIV) lie within the membrane without spanning it. Residues 1096-1506 (LKIPAKRHKQ…KVASLFGAHF (411 aa)) lie on the Cytoplasmic side of the membrane. A Nudix hydrolase domain is found at 1350–1501 (RWKRNQGGAI…KTILQKVASL (152 aa)). Ser1378 contributes to the ADP-D-ribose binding site. A Nudix box motif is present at residues 1386-1407 (GSREPGEMLPRKLKRVLRQEFW). Residues Asp1427, Arg1429, Tyr1488, and Asn1490 each coordinate ADP-D-ribose.

The protein belongs to the transient receptor (TC 1.A.4) family. LTrpC subfamily. TRPM2 sub-subfamily. As to quaternary structure, homotetramer. Post-translationally, protein kinase C (PKC)-mediated phosphorylation of TRPM2 at Thr-738 counteracts the effect of cytosolic Ca(2+) and elevates the temperature threshold. In terms of tissue distribution, detected in the preoptic area of the hypothalamus, a brain area involved in body temperature control. Detected in beta-cells in pancreas islets (at protein level). Detected in brain cortex, striatum, hippocampus CA1, CA2 and CA3 layers, and in the Purkinje cell layer in cerebellum. Widely expressed, with highest levels in lung, spleen, eye and brain. Detected in dendritic cells and in polymorphonuclear neutrophils.

The protein resides in the cell membrane. It is found in the perikaryon. Its subcellular location is the cell projection. The protein localises to the cytoplasmic vesicle. It localises to the lysosome. It catalyses the reaction Ca(2+)(in) = Ca(2+)(out). It carries out the reaction Na(+)(in) = Na(+)(out). With respect to regulation, activated by intracellular ADP-ribose, beta-NAD (NAD(+)) and similar compounds, and by oxidative stress caused by reactive oxygen or nitrogen species. Ca(2+) and PI(4,5)P2 are required for channel opening by ADP-ribose. Activated by moderate heat (35 to 40 degrees Celsius). Activation by ADP-ribose and beta-NAD is strongly increased by moderate heat (35 to 40 degrees Celsius). Likewise, reactive oxygen species lower the threshold for activation by moderate heat (37 degrees Celsius). Inactivated by exposure to extracellular pH between 4.0 and 6.5; irreversibly inactivated when open channels are exposed to extracellular pH between 4.0 and 6.5, while pre-exposure of closed channels to extracellular pH 5.5 gives rise to currents that rapidly inactivate, but protects against irreversible inactivation. Inactivated by intracellular ATP. Activated by arachidonic acid. Inhibited by 2-aminoethyl diphenylborinate (2-APB). Functionally, nonselective, voltage-independent cation channel that mediates Na(+) and Ca(2+) influx, leading to increased cytoplasmic Ca(2+) levels. Functions as a ligand-gated ion channel, gated by intracellular adenosine diphosphate ribose (ADP-ribose), Ca(2+), warm temperature, and oxidative stress. The precise physiological activators are under debate; the true, physiological activators may be ADP-ribose and ADP-ribose-2'-phosphate. Binding of ADP-ribose to the cytoplasmic Nudix domain causes a conformation change; the channel is primed but still requires Ca(2+) binding to trigger channel opening. Extracellular Ca(2+) passes through the channel and increases channel activity. Also contributes to Ca(2+) release from intracellular stores in response to ADP-ribose. Plays a role in numerous processes that involve signaling via intracellular Ca(2+) levels. Besides, mediates the release of lysosomal Zn(2+) stores in response to reactive oxygen species, leading to increased cytosolic Zn(2+) levels. Plays a role in mediating behavorial and physiological responses to moderate heat and thereby contributes to body temperature homeostasis. Plays a role in insulin secretion, a process that requires increased cytoplasmic Ca(2+) levels. Required for normal IFNG and cytokine secretion and normal innate immune immunity in response to bacterial infection. Required for normal phagocytosis and cytokine release by macrophages exposed to zymosan (in vitro). Plays a role in dendritic cell differentiation and maturation, and in dendritic cell chemotaxis via its role in regulating cytoplasmic Ca(2+) levels. Plays a role in the regulation of the reorganization of the actin cytoskeleton and filopodia formation in response to reactive oxygen species via its function in increasing cytoplasmic Ca(2+) and Zn(2+) levels. Confers susceptibility to cell death following oxidative stress. The chain is Transient receptor potential cation channel subfamily M member 2 (Trpm2) from Mus musculus (Mouse).